The chain runs to 627 residues: Phosphomethylpyrimidine synthase (627 aa).

A compositionally biased stretch (polar residues) spans 1 to 24 (MSATQKNNITRLEQLDRQSTQPFP). The disordered stretch occupies residues 1-29 (MSATQKNNITRLEQLDRQSTQPFPNSRKV). Residues asparagine 231, methionine 260, tyrosine 289, histidine 325, 345–347 (SRG), 386–389 (DGLR), and glutamate 425 contribute to the substrate site. Histidine 429 contributes to the Zn(2+) binding site. Tyrosine 452 lines the substrate pocket. Residue histidine 493 participates in Zn(2+) binding. Positions 573, 576, and 581 each coordinate [4Fe-4S] cluster.

Belongs to the ThiC family. In terms of assembly, homodimer. It depends on [4Fe-4S] cluster as a cofactor.

It catalyses the reaction 5-amino-1-(5-phospho-beta-D-ribosyl)imidazole + S-adenosyl-L-methionine = 4-amino-2-methyl-5-(phosphooxymethyl)pyrimidine + CO + 5'-deoxyadenosine + formate + L-methionine + 3 H(+). The protein operates within cofactor biosynthesis; thiamine diphosphate biosynthesis. In terms of biological role, catalyzes the synthesis of the hydroxymethylpyrimidine phosphate (HMP-P) moiety of thiamine from aminoimidazole ribotide (AIR) in a radical S-adenosyl-L-methionine (SAM)-dependent reaction. The polypeptide is Phosphomethylpyrimidine synthase (Pseudomonas aeruginosa (strain UCBPP-PA14)).